A 256-amino-acid polypeptide reads, in one-letter code: Isoprenyl transferase (256 aa).

Aspartate 33 is a catalytic residue. Position 33 (aspartate 33) interacts with Mg(2+). Residues 34–37 (GNGR), tryptophan 38, arginine 46, histidine 50, and 78–80 (STE) each bind substrate. Catalysis depends on asparagine 81, which acts as the Proton acceptor. Substrate-binding positions include tryptophan 82, arginine 84, arginine 201, and 207 to 209 (RIS). Glutamate 220 lines the Mg(2+) pocket.

This sequence belongs to the UPP synthase family. Homodimer. The cofactor is Mg(2+).

Its function is as follows. Catalyzes the condensation of isopentenyl diphosphate (IPP) with allylic pyrophosphates generating different type of terpenoids. The polypeptide is Isoprenyl transferase (Staphylococcus aureus (strain Mu50 / ATCC 700699)).